We begin with the raw amino-acid sequence, 322 residues long: Undecaprenyl-phosphate 4-deoxy-4-formamido-L-arabinose transferase (322 aa).

Residues 1–235 (MFEIHPVKKV…TCLTTTPLRM (235 aa)) are Cytoplasmic-facing. Residues 236–256 (LSLLGSIIAIGGFSIAVLLVI) traverse the membrane as a helical segment. Residues 257–269 (LRLTFGPQWAAEG) lie on the Periplasmic side of the membrane. A helical transmembrane segment spans residues 270–290 (VFMLFAVLFTFIGAQFIGMGL). Topologically, residues 291-322 (LGEYIGRIYTDVRARPRYFVQQVIRPSSKENE) are cytoplasmic.

The protein belongs to the glycosyltransferase 2 family.

Its subcellular location is the cell inner membrane. It catalyses the reaction UDP-4-deoxy-4-formamido-beta-L-arabinose + di-trans,octa-cis-undecaprenyl phosphate = 4-deoxy-4-formamido-alpha-L-arabinopyranosyl di-trans,octa-cis-undecaprenyl phosphate + UDP. It functions in the pathway glycolipid biosynthesis; 4-amino-4-deoxy-alpha-L-arabinose undecaprenyl phosphate biosynthesis; 4-amino-4-deoxy-alpha-L-arabinose undecaprenyl phosphate from UDP-4-deoxy-4-formamido-beta-L-arabinose and undecaprenyl phosphate: step 1/2. It participates in bacterial outer membrane biogenesis; lipopolysaccharide biosynthesis. In terms of biological role, catalyzes the transfer of 4-deoxy-4-formamido-L-arabinose from UDP to undecaprenyl phosphate. The modified arabinose is attached to lipid A and is required for resistance to polymyxin and cationic antimicrobial peptides. The sequence is that of Undecaprenyl-phosphate 4-deoxy-4-formamido-L-arabinose transferase from Escherichia coli (strain SMS-3-5 / SECEC).